A 325-amino-acid chain; its full sequence is Release factor glutamine methyltransferase (325 aa).

S-adenosyl-L-methionine is bound by residues Gly-141–Gly-145, Asp-164, Trp-193, and Asn-207. Asn-207 to Tyr-210 lines the substrate pocket. The segment at Leu-306 to Ala-325 is disordered.

Belongs to the protein N5-glutamine methyltransferase family. PrmC subfamily.

It catalyses the reaction L-glutaminyl-[peptide chain release factor] + S-adenosyl-L-methionine = N(5)-methyl-L-glutaminyl-[peptide chain release factor] + S-adenosyl-L-homocysteine + H(+). Functionally, methylates the class 1 translation termination release factors RF1/PrfA and RF2/PrfB on the glutamine residue of the universally conserved GGQ motif. In Rhodospirillum rubrum (strain ATCC 11170 / ATH 1.1.1 / DSM 467 / LMG 4362 / NCIMB 8255 / S1), this protein is Release factor glutamine methyltransferase.